We begin with the raw amino-acid sequence, 151 residues long: Ribosomal RNA large subunit methyltransferase H (151 aa).

S-adenosyl-L-methionine is bound by residues Gly-100 and 119–124; that span reads LSKMTF.

It belongs to the RNA methyltransferase RlmH family. As to quaternary structure, homodimer.

The protein resides in the cytoplasm. The enzyme catalyses pseudouridine(1915) in 23S rRNA + S-adenosyl-L-methionine = N(3)-methylpseudouridine(1915) in 23S rRNA + S-adenosyl-L-homocysteine + H(+). Its function is as follows. Specifically methylates the pseudouridine at position 1915 (m3Psi1915) in 23S rRNA. The polypeptide is Ribosomal RNA large subunit methyltransferase H (Thermotoga sp. (strain RQ2)).